Reading from the N-terminus, the 107-residue chain is Integration host factor subunit beta (107 aa).

The segment at 56 to 107 is disordered; sequence RPARVGRNPKSGEKVQVPEKFVPHFKPGKELRERVDGRAGEPLKADDPDDER. Residues 82 to 101 are compositionally biased toward basic and acidic residues; it reads PGKELRERVDGRAGEPLKAD.

This sequence belongs to the bacterial histone-like protein family. As to quaternary structure, heterodimer of an alpha and a beta chain.

Functionally, this protein is one of the two subunits of integration host factor, a specific DNA-binding protein that functions in genetic recombination as well as in transcriptional and translational control. This chain is Integration host factor subunit beta, found in Burkholderia vietnamiensis (strain G4 / LMG 22486) (Burkholderia cepacia (strain R1808)).